A 237-amino-acid polypeptide reads, in one-letter code: Purine nucleoside phosphorylase DeoD-type (237 aa).

A purine D-ribonucleoside is bound at residue His-4. Residues Gly-20, Arg-24, Arg-43, and 87–90 contribute to the phosphate site; that span reads RVGT. A purine D-ribonucleoside-binding positions include 179–181 and 203–204; these read EME and SD. Residue Asp-204 is the Proton donor of the active site.

The protein belongs to the PNP/UDP phosphorylase family. As to quaternary structure, homohexamer; trimer of homodimers.

The enzyme catalyses a purine D-ribonucleoside + phosphate = a purine nucleobase + alpha-D-ribose 1-phosphate. The catalysed reaction is a purine 2'-deoxy-D-ribonucleoside + phosphate = a purine nucleobase + 2-deoxy-alpha-D-ribose 1-phosphate. Its function is as follows. Catalyzes the reversible phosphorolytic breakdown of the N-glycosidic bond in the beta-(deoxy)ribonucleoside molecules, with the formation of the corresponding free purine bases and pentose-1-phosphate. This Streptococcus pyogenes serotype M4 (strain MGAS10750) protein is Purine nucleoside phosphorylase DeoD-type.